A 368-amino-acid polypeptide reads, in one-letter code: Chaperone protein DnaJ (368 aa).

The region spanning 5–69 (DYYEVLGLDK…QKRAQYDRFG (65 aa)) is the J domain. Residues 126–208 (GKTETIELEI…CHGSGHVKKK (83 aa)) form a CR-type zinc finger. 8 residues coordinate Zn(2+): C139, C142, C156, C159, C182, C185, C196, and C199. 4 CXXCXGXG motif repeats span residues 139–146 (CDTCMGSG), 156–163 (CNRCGGSG), 182–189 (CSQCHGSG), and 196–203 (CPTCHGSG).

It belongs to the DnaJ family. In terms of assembly, homodimer. Zn(2+) serves as cofactor.

It is found in the cytoplasm. Functionally, participates actively in the response to hyperosmotic and heat shock by preventing the aggregation of stress-denatured proteins and by disaggregating proteins, also in an autonomous, DnaK-independent fashion. Unfolded proteins bind initially to DnaJ; upon interaction with the DnaJ-bound protein, DnaK hydrolyzes its bound ATP, resulting in the formation of a stable complex. GrpE releases ADP from DnaK; ATP binding to DnaK triggers the release of the substrate protein, thus completing the reaction cycle. Several rounds of ATP-dependent interactions between DnaJ, DnaK and GrpE are required for fully efficient folding. Also involved, together with DnaK and GrpE, in the DNA replication of plasmids through activation of initiation proteins. The sequence is that of Chaperone protein DnaJ from Exiguobacterium sp. (strain ATCC BAA-1283 / AT1b).